The sequence spans 165 residues: MIHCRSMDSPIGPLILAGHGSVLTNLQMVDQTYEPSRVGWLPENGAFAEAVSQLDAYFAGELTEFAIELDLCGTEFQQRVWQALLTIPYGETRSYGEIAEQVGAPGAARAVGLANSRNPIAIIVPCHRVIGASGQLIGYGGGLNRKLTLLELEKHQVLTSLTLFD.

The Nucleophile; methyl group acceptor role is filled by Cys126.

This sequence belongs to the MGMT family.

The protein localises to the cytoplasm. It carries out the reaction a 6-O-methyl-2'-deoxyguanosine in DNA + L-cysteinyl-[protein] = S-methyl-L-cysteinyl-[protein] + a 2'-deoxyguanosine in DNA. It catalyses the reaction a 4-O-methyl-thymidine in DNA + L-cysteinyl-[protein] = a thymidine in DNA + S-methyl-L-cysteinyl-[protein]. In terms of biological role, involved in the cellular defense against the biological effects of O6-methylguanine (O6-MeG) and O4-methylthymine (O4-MeT) in DNA. Repairs the methylated nucleobase in DNA by stoichiometrically transferring the methyl group to a cysteine residue in the enzyme. This is a suicide reaction: the enzyme is irreversibly inactivated. The chain is Methylated-DNA--protein-cysteine methyltransferase from Mycobacterium leprae (strain TN).